Here is a 333-residue protein sequence, read N- to C-terminus: Cap-specific mRNA (nucleoside-2'-O-)-methyltransferase (333 aa).

Position 22 (Tyr22) interacts with mRNA. Residues Gln39, Tyr66, Gly68, Gly72, Asp95, Arg97, Val116, and Asp138 each coordinate S-adenosyl-L-methionine. The binding to NPH-I stretch occupies residues 169 to 249 (PVASSLKWRC…NKIVRNKVVV (81 aa)). A binding to Rap94 region spans residues 169–333 (PVASSLKWRC…NSKRSVRSNK (165 aa)). The active-site For methyltransferase activity is Lys175. MRNA is bound by residues 177 to 180 (RCPF), Asp182, 205 to 207 (SAE), and Glu233. The tract at residues 305 to 333 (SHEPIQRKISSKNSMSKNRNSKRSVRSNK) is disordered. Positions 311-322 (RKISSKNSMSKN) are enriched in low complexity. Residues 323–333 (RNSKRSVRSNK) are compositionally biased toward basic residues.

It belongs to the class I-like SAM-binding methyltransferase superfamily. Poxvirus/kinetoplastid 2'-O-MTase family. In terms of assembly, interacts with poly(A) polymerase catalytic subunit OPG063. Interacts with OPG109 and OPG123; these interactions might help linking transcription to capping and polyadenylation.

It localises to the virion. It catalyses the reaction a 5'-end (N(7)-methyl 5'-triphosphoguanosine)-ribonucleoside in mRNA + S-adenosyl-L-methionine = a 5'-end (N(7)-methyl 5'-triphosphoguanosine)-(2'-O-methyl-ribonucleoside) in mRNA + S-adenosyl-L-homocysteine + H(+). Its function is as follows. Displays methyltransferase, positive regulation of the poly(A) polymerase and transcription elongation activities. Involved in the modification of both mRNA ends and in intermediate and late gene positive transcription elongation. At the mRNAs 5' end, methylates the ribose 2' OH group of the first transcribed nucleotide, thereby producing a 2'-O-methylpurine cap. At the 3' end, functions as a processivity factor which stimulates the activity of the viral poly(A) polymerase OPG063 that creates mRNA's poly(A) tail. In the presence of OPG102, OPG063 does not dissociate from the RNA allowing tail elongation to around 250 adenylates. The polypeptide is Cap-specific mRNA (nucleoside-2'-O-)-methyltransferase (OPG102) (Vaccinia virus (strain Western Reserve) (VACV)).